Reading from the N-terminus, the 44-residue chain is MNCEKCSGDMELQDSHYSYVSPTNRVAIKYYKCLECGNEMAIEE.

This is an uncharacterized protein from His1 virus (isolate Australia/Victoria) (His1V).